We begin with the raw amino-acid sequence, 173 residues long: Peptidyl-prolyl cis-trans isomerase cyp3 (173 aa).

One can recognise a PPIase cyclophilin-type domain in the interval Phe8–Glu172.

The protein belongs to the cyclophilin-type PPIase family. PPIase H subfamily.

It is found in the cytoplasm. The protein localises to the cytoskeleton. Its subcellular location is the microtubule organizing center. The protein resides in the spindle pole body. The catalysed reaction is [protein]-peptidylproline (omega=180) = [protein]-peptidylproline (omega=0). In terms of biological role, PPIases accelerate the folding of proteins. It catalyzes the cis-trans isomerization of proline imidic peptide bonds in oligopeptides. In Schizosaccharomyces pombe (strain 972 / ATCC 24843) (Fission yeast), this protein is Peptidyl-prolyl cis-trans isomerase cyp3 (cyp3).